Reading from the N-terminus, the 318-residue chain is Small ribosomal subunit protein uS2 (318 aa).

It belongs to the universal ribosomal protein uS2 family.

The sequence is that of Small ribosomal subunit protein uS2 from Mesomycoplasma hyopneumoniae (strain J / ATCC 25934 / NCTC 10110) (Mycoplasma hyopneumoniae).